Here is a 32-residue protein sequence, read N- to C-terminus: Variegin (32 aa).

The tract at residues 1–32 (SDQGDVAEPKMHKTAPPFDFEAIPEEYLDDES) is disordered. The interval 8 to 14 (EPKMHKT) is contains the active site. The O-linked (Hex) threonine glycan is linked to threonine 14. A compositionally biased stretch (acidic residues) spans 22–32 (AIPEEYLDDES).

As to quaternary structure, interacts with human F2 (thrombin); the interaction results in thrombin inhibition.

It is found in the secreted. Its function is as follows. Thrombin inhibitor. Does not inhibit other serine proteases. This Amblyomma variegatum (Tropical bont tick) protein is Variegin.